A 396-amino-acid chain; its full sequence is Glycerate kinase (396 aa).

The protein belongs to the glycerate kinase type-2 family.

The protein localises to the cytoplasm. It carries out the reaction (R)-glycerate + ATP = (2R)-3-phosphoglycerate + ADP + H(+). The sequence is that of Glycerate kinase (GLYCTK) from Macaca fascicularis (Crab-eating macaque).